The chain runs to 258 residues: 5'-nucleotidase SurE (258 aa).

Residues Asp-8, Asp-9, Ser-40, and Asn-93 each coordinate a divalent metal cation.

This sequence belongs to the SurE nucleotidase family. The cofactor is a divalent metal cation.

The protein resides in the cytoplasm. It catalyses the reaction a ribonucleoside 5'-phosphate + H2O = a ribonucleoside + phosphate. In terms of biological role, nucleotidase that shows phosphatase activity on nucleoside 5'-monophosphates. The polypeptide is 5'-nucleotidase SurE (Afipia carboxidovorans (strain ATCC 49405 / DSM 1227 / KCTC 32145 / OM5) (Oligotropha carboxidovorans)).